The sequence spans 680 residues: DNA-directed RNA polymerase subunit beta' (680 aa).

Zn(2+) is bound by residues Cys-69, Cys-71, Cys-87, and Cys-90. Residues Asp-489, Asp-491, and Asp-493 each contribute to the Mg(2+) site.

It belongs to the RNA polymerase beta' chain family. RpoC1 subfamily. In plastids the minimal PEP RNA polymerase catalytic core is composed of four subunits: alpha, beta, beta', and beta''. When a (nuclear-encoded) sigma factor is associated with the core the holoenzyme is formed, which can initiate transcription. Requires Mg(2+) as cofactor. The cofactor is Zn(2+).

The protein localises to the plastid. It is found in the chloroplast. It catalyses the reaction RNA(n) + a ribonucleoside 5'-triphosphate = RNA(n+1) + diphosphate. Its function is as follows. DNA-dependent RNA polymerase catalyzes the transcription of DNA into RNA using the four ribonucleoside triphosphates as substrates. The polypeptide is DNA-directed RNA polymerase subunit beta' (Aethionema grandiflorum (Persian stone-cress)).